A 363-amino-acid polypeptide reads, in one-letter code: D(1) dopamine receptor (363 aa).

The Extracellular segment spans residues 1 to 24; that stretch reads MAVLDLNLTTVIDSGFMESDRSVR. Asn-7 carries N-linked (GlcNAc...) asparagine glycosylation. The chain crosses the membrane as a helical span at residues 25-45; the sequence is VLTGCFLSVLILSTLLGNTLV. Residues 46-61 are Cytoplasmic-facing; it reads CAAVTKFRHLRSKVTN. A helical membrane pass occupies residues 62 to 81; sequence FFVISLAVSDLLVAVLVMPW. Residues 82 to 98 are Extracellular-facing; the sequence is KAVTEVAGFWPFGAFCD. An intrachain disulfide couples Cys-97 to Cys-187. Residues 99–120 traverse the membrane as a helical segment; it reads IWVAFDIMCSTASILNLCVISV. The Cytoplasmic portion of the chain corresponds to 121-139; that stretch reads DRYWAISSPFRYERKMTPR. A helical membrane pass occupies residues 140–164; sequence VAFVMISGAWTLSVLISFIPVQLKW. At 165-194 the chain is on the extracellular side; sequence HKAQPIGFLEVNASRRDLPTDNCDSSLNRT. A helical transmembrane segment spans residues 195–219; that stretch reads YAISSSLISFYIPVAIMIVTYTQIY. Topologically, residues 220-271 are cytoplasmic; the sequence is RIAQKQIRRISALERAAESAQIRHDSMGSGSNMDLESSFKLSFKRETKVLKT. Residues 272–297 traverse the membrane as a helical segment; that stretch reads LSVIMGVFVCCWLPFFILNCMVPFCK. Residues 298 to 310 are Extracellular-facing; sequence RTSNGLPCISPTT. The chain crosses the membrane as a helical span at residues 311-330; that stretch reads FDVFVWFGWANSSLNPIIYA. Over 331–363 the chain is Cytoplasmic; it reads FNADFRRAFAILLGCQRLCPGSISMETPSLNKN. Residue Cys-345 is the site of S-palmitoyl cysteine attachment.

Belongs to the G-protein coupled receptor 1 family. In terms of tissue distribution, retina.

It localises to the cell membrane. The protein resides in the cell projection. The protein localises to the cilium membrane. Functionally, dopamine receptor whose activity is mediated by G proteins which activate adenylyl cyclase. Could be involved in growth hormone release. This Carassius auratus (Goldfish) protein is D(1) dopamine receptor.